We begin with the raw amino-acid sequence, 274 residues long: Rhamnulose-1-phosphate aldolase (274 aa).

Glutamate 117 is a catalytic residue. Zn(2+) contacts are provided by histidine 141, histidine 143, and histidine 212.

It belongs to the aldolase class II family. RhaD subfamily. Homotetramer. Zn(2+) serves as cofactor.

The protein localises to the cytoplasm. It catalyses the reaction L-rhamnulose 1-phosphate = (S)-lactaldehyde + dihydroxyacetone phosphate. Its pathway is carbohydrate degradation; L-rhamnose degradation; glycerone phosphate from L-rhamnose: step 3/3. In terms of biological role, catalyzes the reversible cleavage of L-rhamnulose-1-phosphate to dihydroxyacetone phosphate (DHAP) and L-lactaldehyde. This is Rhamnulose-1-phosphate aldolase from Escherichia coli (strain SMS-3-5 / SECEC).